A 688-amino-acid chain; its full sequence is G protein-coupled receptor kinase 3 (688 aa).

Positions 1-190 (MADLEAVLAD…ELNIHLSMND (190 aa)) are N-terminal. Positions 54–175 (TFDKIFNQKI…MESEKFTRFC (122 aa)) constitute an RGS domain. One can recognise a Protein kinase domain in the interval 191-453 (FSVHRIIGRG…ARELKEHIFF (263 aa)). Residues 197–205 (IGRGGFGEV) and K220 each bind ATP. The active-site Proton acceptor is D317. Residues 454 to 521 (KGIDWQYVYL…MISERWQQEV (68 aa)) form the AGC-kinase C-terminal domain. The PH domain occupies 558–652 (DCIMHGYMLK…WLKELTCTFN (95 aa)).

The protein belongs to the protein kinase superfamily. AGC Ser/Thr protein kinase family. GPRK subfamily. Interacts with GIT1. Post-translationally, ubiquitinated. In terms of tissue distribution, expressed in brain cortex, hippocampus, striatum, hypothalamus, cerebellum and brainstem (at protein level).

The protein resides in the postsynapse. Its subcellular location is the presynapse. It carries out the reaction [beta-adrenergic receptor] + ATP = [beta-adrenergic receptor]-phosphate + ADP + H(+). Its function is as follows. Specifically phosphorylates the agonist-occupied form of the beta-adrenergic and closely related receptors. The polypeptide is G protein-coupled receptor kinase 3 (Rattus norvegicus (Rat)).